Consider the following 400-residue polypeptide: Phosphoglycerate kinase (400 aa).

Residues 22 to 24 (DFN), arginine 38, 61 to 64 (HLGR), arginine 119, and arginine 152 each bind substrate. Residues lysine 205, glycine 296, glutamate 327, and 353-356 (GGDT) contribute to the ATP site.

It belongs to the phosphoglycerate kinase family. Monomer.

The protein resides in the cytoplasm. It carries out the reaction (2R)-3-phosphoglycerate + ATP = (2R)-3-phospho-glyceroyl phosphate + ADP. The protein operates within carbohydrate degradation; glycolysis; pyruvate from D-glyceraldehyde 3-phosphate: step 2/5. This chain is Phosphoglycerate kinase, found in Campylobacter lari (strain RM2100 / D67 / ATCC BAA-1060).